Reading from the N-terminus, the 356-residue chain is 4-hydroxy-3-methylbut-2-en-1-yl diphosphate synthase (flavodoxin) (356 aa).

[4Fe-4S] cluster contacts are provided by cysteine 264, cysteine 267, cysteine 299, and glutamate 306.

This sequence belongs to the IspG family. Requires [4Fe-4S] cluster as cofactor.

The enzyme catalyses (2E)-4-hydroxy-3-methylbut-2-enyl diphosphate + oxidized [flavodoxin] + H2O + 2 H(+) = 2-C-methyl-D-erythritol 2,4-cyclic diphosphate + reduced [flavodoxin]. Its pathway is isoprenoid biosynthesis; isopentenyl diphosphate biosynthesis via DXP pathway; isopentenyl diphosphate from 1-deoxy-D-xylulose 5-phosphate: step 5/6. Functionally, converts 2C-methyl-D-erythritol 2,4-cyclodiphosphate (ME-2,4cPP) into 1-hydroxy-2-methyl-2-(E)-butenyl 4-diphosphate. The chain is 4-hydroxy-3-methylbut-2-en-1-yl diphosphate synthase (flavodoxin) from Campylobacter lari (strain RM2100 / D67 / ATCC BAA-1060).